The chain runs to 100 residues: uncharacterized protein (100 aa).

The helical transmembrane segment at 62-82 (IPIVIIVSIFILLIIGSISLY) threads the bilayer.

Its subcellular location is the membrane. This is an uncharacterized protein from Dictyostelium discoideum (Social amoeba).